The following is a 140-amino-acid chain: Sex-regulated protein janus-B (140 aa).

Residue Arg-42 participates in substrate binding. His-69 (proton acceptor) is an active-site residue. 110-112 serves as a coordination point for substrate; it reads SRT.

The protein belongs to the janus family.

In terms of biological role, janA and janB regulate somatic sex differentiation. The chain is Sex-regulated protein janus-B (janB) from Drosophila erecta (Fruit fly).